The sequence spans 180 residues: Thebaine synthase 1 (180 aa).

Ser96 contributes to the thebaine binding site. Residue His111 is the Proton acceptor of the active site. Residue Thr127 participates in thebaine binding.

It belongs to the MLP family. As to quaternary structure, homodimer (allosteric) and oligomers. Expressed in poppy latex.

It catalyses the reaction (7S)-O-acetylsalutaridinol = thebaine + acetate + H(+). It functions in the pathway alkaloid biosynthesis; morphine biosynthesis. Catalyzes the formation of thebaine from (7S)-salutaridinol 7-O-acetate at the expense of labile hydroxylated by-products, which are preferentially produced by spontaneous allylic elimination. This chain is Thebaine synthase 1, found in Papaver somniferum (Opium poppy).